The following is a 570-amino-acid chain: MTKKKNPNVFLDVSIGGDPVQRIVIELFADVVPKTAENFRALCTGEAGVGKSTGKPLHFKGSSFHRVIKGFMAQGGDFSNGNGTGGESIYGGKFSDENFRLDHDGAGVLSMANCGPNTNGSQFFILFKRQPHLDGKHVVFGKVVEGMAVIKKMELVGTSDGKPTSPVKIIDCGETSQIRAHDAAEREKGKSKKSNKNFSPGDVSDREAKETRKKESNEKRIKRKRRYSSSDSYSSSSDSDSDSESEAYSSSSYESSSSSDGKHRKRKSTTRHKGRRGERKSKGRSGKKKARPDRKPSTNSSSDTESSSSSDDEKVGHKAIKSVKVDNADQHANLDDSVKSRSRSPIRRRNQNSRSKSPSRSPVRVLGNGNRSPSRSPVRDLGNGSRSPREKPTEETVGKSFRSPSPSGVPKRIRKGRGFTERYSFARKYHTPSPERSPPRHWPDRRNFQDRNRDRYPSNRSYSERSPRGRFRSPPRRRSPPRYNRRRRSTSRSPDGYRRRLRDGSRSQSPRHRSRSQSPRKRQPISQDLKSRLGPQRSPIRGGRTSPAESLSPSHSPSPPGKRGLVSYAD.

Residues 10-174 (FLDVSIGGDP…SPVKIIDCGE (165 aa)) enclose the PPIase cyclophilin-type domain. Residues 180–570 (AHDAAEREKG…GKRGLVSYAD (391 aa)) are disordered. Positions 203 to 219 (VSDREAKETRKKESNEK) are enriched in basic and acidic residues. 2 stretches are compositionally biased toward low complexity: residues 229-238 (SSDSYSSSSD) and 246-259 (EAYS…SSSS). Basic residues predominate over residues 262-292 (KHRKRKSTTRHKGRRGERKSKGRSGKKKARP). Residues 297–309 (STNSSSDTESSSS) are compositionally biased toward low complexity. Positions 323–339 (VKVDNADQHANLDDSVK) are enriched in basic and acidic residues. Ser340 is modified (phosphoserine). The segment covering 340–351 (SRSRSPIRRRNQ) has biased composition (basic residues). Over residues 352–365 (NSRSKSPSRSPVRV) the composition is skewed to low complexity. Basic and acidic residues-rich tracts occupy residues 387–397 (SPREKPTEETV) and 437–467 (SPPR…ERSP). A compositionally biased stretch (basic residues) spans 468–490 (RGRFRSPPRRRSPPRYNRRRRST). Residues 495–505 (DGYRRRLRDGS) are compositionally biased toward basic and acidic residues. Positions 509–523 (SPRHRSRSQSPRKRQ) are enriched in basic residues. Over residues 546–555 (SPAESLSPSH) the composition is skewed to low complexity.

It belongs to the cyclophilin-type PPIase family. Interacts with SNRNP35, RNU1, SCL28, SCL30, SR30 and SR34. The binding to SR34 is phosphorylation-dependent. Ubiquitous.

Its subcellular location is the nucleus. It is found in the nucleoplasm. The protein resides in the nucleus speckle. It carries out the reaction [protein]-peptidylproline (omega=180) = [protein]-peptidylproline (omega=0). Its function is as follows. PPIases accelerate the folding of proteins. It catalyzes the cis-trans isomerization of proline imidic peptide bonds in oligopeptides. May be implicated in the folding, transport, and assembly of proteins. Probably involved in early steps of spliceosomal assembly. This is Peptidyl-prolyl cis-trans isomerase CYP63 (CYP63) from Arabidopsis thaliana (Mouse-ear cress).